Reading from the N-terminus, the 391-residue chain is MSLNPRDVVIVDFGRTPMGRSKGGMHRNTRAEDMSAHLISKVLERNSKVDPGEVEDVIWGCVNQTLEQGWNIARMASLMTQIPHTSAAQTVSRLCGSSMSALHTAAQAIMTGNGDVFVVGGVEHMGHVSMMHGVDPNPHMSLYAAKASGMMGLTAEMLGKMHGISREQQDAFAVRSHQLAHKATVEGKFKDEIIPMQGYDENGFLKIFDYDETIRPDTTLESLAALKPAFNPKGGTVTAGTSSQITDGASCMIVMSAQRAKDLGLEPLAVIRSMAVAGVDPAIMGYGPVPATQKALKRAGLNMADIDFIELNEAFAAQALPVLKDLKVLDKMNEKVNLHGGAIALGHPFGCSGARISGTLLNVMKQNGGTFGLSTMCIGLGQGIATVFERV.

The Acyl-thioester intermediate role is filled by Cys95. Active-site proton acceptor residues include His347 and Cys377.

This sequence belongs to the thiolase-like superfamily. Thiolase family. Heterotetramer of two alpha chains (FadB) and two beta chains (FadA).

Its subcellular location is the cytoplasm. The enzyme catalyses an acyl-CoA + acetyl-CoA = a 3-oxoacyl-CoA + CoA. It functions in the pathway lipid metabolism; fatty acid beta-oxidation. In terms of biological role, catalyzes the final step of fatty acid oxidation in which acetyl-CoA is released and the CoA ester of a fatty acid two carbons shorter is formed. This Pseudomonas fragi protein is 3-ketoacyl-CoA thiolase.